The chain runs to 126 residues: MIRTMLQGKLHRVKVTQADLHYEGSCAIDQDFLEAAGILEYEAIDIYNVDNGQRFSTYAIAAERGSRIISVNGAAARCACVGDKLIICSYVQMSYAAARLHHPKVAYFEGENQLQRKAKAVPVQVA.

S25 (schiff-base intermediate with substrate; via pyruvic acid) is an active-site residue. The residue at position 25 (S25) is a Pyruvic acid (Ser). Residue T57 participates in substrate binding. Y58 serves as the catalytic Proton donor. 73 to 75 (GAA) serves as a coordination point for substrate.

It belongs to the PanD family. Heterooctamer of four alpha and four beta subunits. Requires pyruvate as cofactor. In terms of processing, is synthesized initially as an inactive proenzyme, which is activated by self-cleavage at a specific serine bond to produce a beta-subunit with a hydroxyl group at its C-terminus and an alpha-subunit with a pyruvoyl group at its N-terminus.

The protein resides in the cytoplasm. The enzyme catalyses L-aspartate + H(+) = beta-alanine + CO2. Its pathway is cofactor biosynthesis; (R)-pantothenate biosynthesis; beta-alanine from L-aspartate: step 1/1. In terms of biological role, catalyzes the pyruvoyl-dependent decarboxylation of aspartate to produce beta-alanine. In Yersinia pestis bv. Antiqua (strain Antiqua), this protein is Aspartate 1-decarboxylase.